The sequence spans 555 residues: 3-oxocholest-4-en-26-oate--CoA ligase (555 aa).

Residues 172–180, D418, R433, and K524 each bind ATP; that span reads TGGTTGHPK. Residues 525-555 form a disordered region; the sequence is PDYRWAKDQTGLRPADEVYNNGDGNGAAATG. Residues 544–555 show a composition bias toward low complexity; the sequence is NNGDGNGAAATG.

It belongs to the ATP-dependent AMP-binding enzyme family.

It carries out the reaction (25S)-3-oxocholest-4-en-26-oate + ATP + CoA = (25S)-3-oxocholest-4-en-26-oyl-CoA + AMP + diphosphate. Its pathway is steroid metabolism; cholesterol metabolism. Its function is as follows. Involved in the degradation of the side chains of C-24 branched-chain sterols. Catalyzes the ATP-dependent CoA thioesterification of the sterol 3-oxocholest-4-en-26-oate to yield 3-oxocholest-4-en-26-oyl-CoA. It can also use beta-sitosterol, campesterol and 3beta-hydroxy-5-cholesten-26-oate. The protein is 3-oxocholest-4-en-26-oate--CoA ligase of Rhodococcus rhodochrous.